A 58-amino-acid polypeptide reads, in one-letter code: Probable U-exon protein (58 aa).

In Snake adenovirus serotype 1 (SnAdV-1), this protein is Probable U-exon protein.